The chain runs to 611 residues: Poly(3-hydroxyalkanoate) polymerase subunit PhaC (611 aa).

Residue Cys349 is part of the active site.

Belongs to the PHA/PHB synthase family. Type I PhaC subfamily. As to quaternary structure, monomer.

The protein resides in the cytoplasm. It catalyses the reaction (3R)-3-hydroxybutanoyl-CoA + [(3R)-hydroxybutanoate](n) = [(3R)-hydroxybutanoate](n+1) + CoA. Its pathway is biopolymer metabolism; poly-(R)-3-hydroxybutanoate biosynthesis. Its function is as follows. Polymerizes D(-)-3-hydroxybutyryl-CoA to create PHB which consists of thousands of hydroxybutyrate molecules linked end to end. PHB serves as an intracellular energy reserve material when cells grow under conditions of nutrient limitation. The protein is Poly(3-hydroxyalkanoate) polymerase subunit PhaC of Rhizobium meliloti (strain 1021) (Ensifer meliloti).